The primary structure comprises 196 residues: Secreted effector protein SseB (196 aa).

This sequence belongs to the EspA/SseB family. As to quaternary structure, may form a complex with SseC and SseD. Binds to the chaperone SseA.

Its subcellular location is the secreted. The protein localises to the cell surface. In terms of biological role, effector proteins function to alter host cell physiology and promote bacterial survival in host tissues. May act as a translocator that mediates translocation of SPI-2 T3SS effector proteins from intraphagosomal bacterial cells into the host cells. SseB is required for correct localization of SseC and SseD on the bacterial cell surface. The polypeptide is Secreted effector protein SseB (sseB) (Salmonella typhimurium (strain LT2 / SGSC1412 / ATCC 700720)).